We begin with the raw amino-acid sequence, 643 residues long: Transmembrane protein 62 (643 aa).

The chain crosses the membrane as a helical span at residues 9–29; the sequence is VVAGLAAAAVAALLLEHYGLA. N-linked (GlcNAc...) asparagine glycosylation is present at Asn-180. The next 4 membrane-spanning stretches (helical) occupy residues 431–451, 484–504, 532–552, and 572–592; these read IVAR…LITF, YSVL…GEII, GIIQ…WSLL, and IIPV…SCYF.

Its subcellular location is the membrane. This chain is Transmembrane protein 62 (Tmem62), found in Mus musculus (Mouse).